A 500-amino-acid chain; its full sequence is Sulfate adenylyltransferase (500 aa).

Residues 1-165 (MLSPHGGILQ…LEAIQLPAHY (165 aa)) are N-terminal. A catalytic region spans residues 166–390 (DYLNLRKSPA…LRQYNPPRYR (225 aa)). Gln-193 is a binding site for sulfate. ATP is bound by residues 193-196 (QTRN) and 287-290 (GRDH). Catalysis depends on residues Thr-194, Arg-195, and Asn-196. Residue Arg-195 coordinates sulfate. Ala-291 serves as a coordination point for sulfate. Position 329 (Ile-329) interacts with ATP. A required for oligomerization; adenylyl-sulfate kinase-like region spans residues 391-500 (QGFVIVVNHE…FLEDNKFFQF (110 aa)).

The protein belongs to the sulfate adenylyltransferase family. As to quaternary structure, homohexamer. Dimer of trimers.

It is found in the cytoplasm. The catalysed reaction is sulfate + ATP + H(+) = adenosine 5'-phosphosulfate + diphosphate. It participates in sulfur metabolism; hydrogen sulfide biosynthesis; sulfite from sulfate: step 1/3. Catalyzes the first intracellular reaction of sulfate assimilation, forming adenosine-5'-phosphosulfate (APS) from inorganic sulfate and ATP. Plays an important role in sulfate activation as a component of the biosynthesis pathway of sulfur-containing amino acids. This is Sulfate adenylyltransferase from Eremothecium gossypii (strain ATCC 10895 / CBS 109.51 / FGSC 9923 / NRRL Y-1056) (Yeast).